The following is a 236-amino-acid chain: 5'-methylthioadenosine/S-adenosylhomocysteine nucleosidase (236 aa).

Catalysis depends on Glu-12, which acts as the Proton acceptor. Substrate is bound by residues Gly-78, Met-153, and 174–175; that span reads ME. Catalysis depends on Asp-198, which acts as the Proton donor.

The protein belongs to the PNP/UDP phosphorylase family. MtnN subfamily.

The enzyme catalyses S-adenosyl-L-homocysteine + H2O = S-(5-deoxy-D-ribos-5-yl)-L-homocysteine + adenine. The catalysed reaction is S-methyl-5'-thioadenosine + H2O = 5-(methylsulfanyl)-D-ribose + adenine. It catalyses the reaction 5'-deoxyadenosine + H2O = 5-deoxy-D-ribose + adenine. It functions in the pathway amino-acid biosynthesis; L-methionine biosynthesis via salvage pathway; S-methyl-5-thio-alpha-D-ribose 1-phosphate from S-methyl-5'-thioadenosine (hydrolase route): step 1/2. Catalyzes the irreversible cleavage of the glycosidic bond in both 5'-methylthioadenosine (MTA) and S-adenosylhomocysteine (SAH/AdoHcy) to adenine and the corresponding thioribose, 5'-methylthioribose and S-ribosylhomocysteine, respectively. Also cleaves 5'-deoxyadenosine, a toxic by-product of radical S-adenosylmethionine (SAM) enzymes, into 5-deoxyribose and adenine. The chain is 5'-methylthioadenosine/S-adenosylhomocysteine nucleosidase from Geobacillus thermodenitrificans (strain NG80-2).